Reading from the N-terminus, the 318-residue chain is L-malyl-CoA/beta-methylmalyl-CoA lyase (318 aa).

Phenylalanine 19, arginine 24, lysine 30, and arginine 76 together coordinate substrate. The Mg(2+) site is built by glutamate 141 and aspartate 168. Substrate contacts are provided by residues 167–168 (AD) and 251–252 (IH).

It belongs to the HpcH/HpaI aldolase family. In terms of assembly, homohexamer. Dimer of trimers. The cofactor is Mg(2+). It depends on Mn(2+) as a cofactor.

The catalysed reaction is (S)-malyl-CoA = glyoxylate + acetyl-CoA. The enzyme catalyses (2R,3S)-beta-methylmalyl-CoA = propanoyl-CoA + glyoxylate. Its function is as follows. Involved in the ethylmalonyl-CoA pathway for acetate assimilation. Catalyzes the reversible condensation of glyoxylate and acetyl-CoA to L-malyl-CoA and the reversible condensation of glyoxylate and propionyl-CoA to yield beta-methylmalyl-CoA. This chain is L-malyl-CoA/beta-methylmalyl-CoA lyase, found in Cereibacter sphaeroides (strain ATCC 17029 / ATH 2.4.9) (Rhodobacter sphaeroides).